We begin with the raw amino-acid sequence, 609 residues long: Chloride channel CLIC-like protein 1 (609 aa).

The first 25 residues, 1 to 25, serve as a signal peptide directing secretion; sequence MKLSSSSSFGLCILVVFFCFVVIES. 3 consecutive transmembrane segments (helical) span residues 212-235, 241-260, and 358-380; these read VSLI…SWFV, FAVS…YMLA, and VTLQ…YGSA. The interval 398 to 553 is disordered; that stretch reads EQPPPAVGQR…PSSIDVKTVG (156 aa). Composition is skewed to basic and acidic residues over residues 454–474 and 507–537; these read ENRE…KRTP and EEVK…DRSE. Residues 538-547 show a composition bias toward low complexity; sequence PITSEPPSSI.

This sequence belongs to the chloride channel MCLC family. In terms of tissue distribution, expressed in the hindbrain, swim bladder and the eye at 1 day post fertilization (dpf) with increased expression at 3 dpf. At 3 dpf, most prominent expression in the retina, with strong expression in the ganglion cell layer, outer nuclear layer and the retinal pigmented epithelium.

It is found in the endoplasmic reticulum membrane. It localises to the golgi apparatus membrane. The protein localises to the nucleus membrane. In terms of biological role, seems to act as a chloride ion channel. Plays a role in retina development. The protein is Chloride channel CLIC-like protein 1 of Danio rerio (Zebrafish).